The chain runs to 370 residues: Forkhead box protein I1-A (370 aa).

Disordered stretches follow at residues 1-28 (MNPVQQPAQHKCPASSLNPPHPKRAQEA), 212-269 (DNGN…CPSP), and 342-370 (SSLPTSNQKQPPYLQQLHPQQSPLYQGRY). A DNA-binding region (fork-head) is located at residues 127 to 221 (RPPYSYSALI…DNGNFRRKRK (95 aa)). A compositionally biased stretch (basic and acidic residues) spans 232–245 (AKREEDHVSPKGKE). Positions 349 to 370 (QKQPPYLQQLHPQQSPLYQGRY) are enriched in low complexity.

Initially localized to the animal hemisphere (the presumptive ectoderm) of early-mid blastula embryos. Becomes restricted to head placodes, excluding the otic placodes, by the tailbud stages.

The protein localises to the nucleus. Functionally, transcription factor. Essential for ventral specification of the early cephalic (head) ectoderm during gastrulation, playing a role in the non-neural versus neural cell fate choice. Binds to DNA via the target sequence 5'-[AG]TAAA[CT]A-3', with 5'-ATAAACA-3' being the preferred binding site. The chain is Forkhead box protein I1-A (foxi1-a) from Xenopus laevis (African clawed frog).